The primary structure comprises 152 residues: 6,7-dimethyl-8-ribityllumazine synthase (152 aa).

5-amino-6-(D-ribitylamino)uracil contacts are provided by residues F18, 49–51, and 75–77; these read ALE and CVI. (2S)-2-hydroxy-3-oxobutyl phosphate is bound at residue 80–81; it reads ET. H83 functions as the Proton donor in the catalytic mechanism. Residue N108 coordinates 5-amino-6-(D-ribitylamino)uracil. Residue R122 coordinates (2S)-2-hydroxy-3-oxobutyl phosphate.

This sequence belongs to the DMRL synthase family.

The catalysed reaction is (2S)-2-hydroxy-3-oxobutyl phosphate + 5-amino-6-(D-ribitylamino)uracil = 6,7-dimethyl-8-(1-D-ribityl)lumazine + phosphate + 2 H2O + H(+). The protein operates within cofactor biosynthesis; riboflavin biosynthesis; riboflavin from 2-hydroxy-3-oxobutyl phosphate and 5-amino-6-(D-ribitylamino)uracil: step 1/2. Its function is as follows. Catalyzes the formation of 6,7-dimethyl-8-ribityllumazine by condensation of 5-amino-6-(D-ribitylamino)uracil with 3,4-dihydroxy-2-butanone 4-phosphate. This is the penultimate step in the biosynthesis of riboflavin. In Bartonella bacilliformis (strain ATCC 35685 / KC583 / Herrer 020/F12,63), this protein is 6,7-dimethyl-8-ribityllumazine synthase.